The chain runs to 430 residues: Histidine--tRNA ligase (430 aa).

It belongs to the class-II aminoacyl-tRNA synthetase family. As to quaternary structure, homodimer.

The protein localises to the cytoplasm. It catalyses the reaction tRNA(His) + L-histidine + ATP = L-histidyl-tRNA(His) + AMP + diphosphate + H(+). The chain is Histidine--tRNA ligase from Chlorobium luteolum (strain DSM 273 / BCRC 81028 / 2530) (Pelodictyon luteolum).